The following is a 286-amino-acid chain: Master replication protein (286 aa).

A CRESS-DNA virus Rep endonuclease domain is found at 2–96; that stretch reads ARQVICWCFT…LEGPWEYGEF (95 aa). Residues 9–12 carry the RCR-1 motif; it reads CFTL. A divalent metal cation is bound by residues E33 and H41. The RCR-2 signature appears at 41–43; that stretch reads HFQ. A Nuclear localization signal motif is present at residues 50-70; it reads KRTSLAGMKKLIPGAHFEKRR. The For DNA cleavage activity role is filled by Y79. The RCR-3 signature appears at 79–82; it reads YAMK. D84 lines the a divalent metal cation pocket. Positions 96 to 102 match the Nuclear localization signal motif; that stretch reads FIPTIED. Position 180 to 188 (180 to 188) interacts with ATP; that stretch reads GPQGGEGKT.

It belongs to the nanoviridea/circoviridae replication-associated protein family. As to quaternary structure, homooligomer (Potential). Rep binds to repeated DNA motifs (iterons). Mg(2+) is required as a cofactor. Requires Mn(2+) as cofactor.

Its subcellular location is the host nucleus. The catalysed reaction is ATP + H2O = ADP + phosphate + H(+). Functionally, essential for the replication of all genomic viral ssDNA (trans-replication). The closed circular ssDNA genome is first converted to a superhelical dsDNA. Rep binds a specific hairpin at the genome origin of replication. Introduces an endonucleolytic nick within the conserved sequence 5'-A[GT]TATTAC-3' in the intergenic region of the genome, thereby initiating the rolling circle replication (RCR). Following cleavage, binds covalently to the 5'-phosphate of DNA as a tyrosyl ester. The cleavage gives rise to a free 3'-OH that serves as a primer for the cellular DNA polymerase. The polymerase synthesizes the (+) strand DNA by rolling circle mechanism. After one round of replication, a Rep-catalyzed nucleotidyl transfer reaction releases a circular single-stranded virus genome, thereby terminating the replication. Displays origin-specific DNA cleavage, nucleotidyl transferase, ATPase and helicase activities. This Astragalus sinicus (Chinese milk vetch) protein is Master replication protein (DNA-R).